Reading from the N-terminus, the 127-residue chain is MKVKFKQFKNGVRVYNLGDKYIVVYKGDVWGIGSTEDEAMADASRVYRDSKGLMLEPSPFDIYEGGTENEEDVEPLMDYKEVAVYYFPPYYLVYDKEKDKVLGSGMDLDDALAEATREKPGLVELFW.

This is an uncharacterized protein from Acidianus two-tailed virus (ATV).